The chain runs to 420 residues: Proteinase-activated receptor 1 (420 aa).

The signal sequence occupies residues Met-1–Gly-20. A propeptide spans Ser-21 to Lys-42 (removed for receptor activation). An N-linked (GlcNAc...) asparagine glycan is attached at Asn-38. Residues Thr-43–Thr-101 lie on the Extracellular side of the membrane. The disordered stretch occupies residues Glu-61 to Arg-80. Asn-86 carries N-linked (GlcNAc...) asparagine glycosylation. Residues Lys-102–Leu-127 form a helical membrane-spanning segment. Residues Phe-128–Ala-136 lie on the Cytoplasmic side of the membrane. Residues Val-137–Phe-156 traverse the membrane as a helical segment. At Lys-157–Arg-175 the chain is on the extracellular side. A disulfide bridge links Cys-174 with Cys-253. A helical membrane pass occupies residues Ile-176–Val-197. Residues Asp-198–Arg-217 lie on the Cytoplasmic side of the membrane. The chain crosses the membrane as a helical span at residues Ala-218–Val-238. The Extracellular segment spans residues Thr-239 to Ile-267. A helical membrane pass occupies residues Tyr-268 to Ile-287. The Cytoplasmic portion of the chain corresponds to Cys-288 to Ala-310. A helical membrane pass occupies residues Leu-311–Leu-333. Residues Thr-334 to Tyr-345 are Extracellular-facing. The chain crosses the membrane as a helical span at residues Phe-346 to Ala-369. Topologically, residues Ser-370–Ala-420 are cytoplasmic.

It belongs to the G-protein coupled receptor 1 family. Post-translationally, proteolytic cleavage generates a new N-terminus that functions as a tethered ligand.

It localises to the cell membrane. In terms of biological role, high affinity receptor that binds the activated thrombin, leading to calcium release from intracellular stores. The thrombin-activated receptor signaling pathway is mediated through PTX-insensitive G proteins, activation of phospholipase C resulting in the production of 1D-myo-inositol 1,4,5-trisphosphate (InsP3) which binds to InsP3 receptors causing calcium release from the stores. This is Proteinase-activated receptor 1 from Xenopus laevis (African clawed frog).